The sequence spans 131 residues: ATP synthase epsilon chain (131 aa).

This sequence belongs to the ATPase epsilon chain family. In terms of assembly, F-type ATPases have 2 components, CF(1) - the catalytic core - and CF(0) - the membrane proton channel. CF(1) has five subunits: alpha(3), beta(3), gamma(1), delta(1), epsilon(1). CF(0) has three main subunits: a, b and c.

The protein resides in the cell membrane. Functionally, produces ATP from ADP in the presence of a proton gradient across the membrane. The protein is ATP synthase epsilon chain of Bacillus licheniformis (strain ATCC 14580 / DSM 13 / JCM 2505 / CCUG 7422 / NBRC 12200 / NCIMB 9375 / NCTC 10341 / NRRL NRS-1264 / Gibson 46).